The sequence spans 549 residues: MKIKRLDKSIVSRIAAGEVITGVYSVVKELIENSIDAGADRIVVELINGGKSEIKVQDNGEGMEKDDLLVCYESHTTSKIDSFQDIYTLNSFGFRGEALYSICQISKTTIFSKTASSNLGHEIEVVAGHLVYEKPVQIEKGTTVIVRDLFFNVPARRKFLKSNAVEARMAVEVFERFCLSHPHINLILTKDQQVVYNLPATTLVQRIKALFPDIPMDSLKAIQSQWKDMELHGCAVSPANLRRKKAIFTFVNGRFVVNQLLQSAIYSAYADFLHQKEHPVVIVNLFLPPKDIDVNVHPQKIEVKFSRDEEVFRFVRDSIKSQLKIPIIHHISRNTPAKVQKRQVEYKSPNAKFTTTSEEMLIPPEDFKIIGIVRKRYIIVETEDELFIVDFHAAHERLIYNKMLSSLNQNDGTDLLIPVQIELRESELALIEKNNVLKQIGFDYEIIKNQLIVKKIPTWLDQSDVKRFIIDSIDEIKLIDIYGLEEVMKKIIADISCKSALRTRDRLDLSQAKYLVREIFANKISTCPHGRPVMYSINFKELDSFFERI.

Belongs to the DNA mismatch repair MutL/HexB family.

In terms of biological role, this protein is involved in the repair of mismatches in DNA. It is required for dam-dependent methyl-directed DNA mismatch repair. May act as a 'molecular matchmaker', a protein that promotes the formation of a stable complex between two or more DNA-binding proteins in an ATP-dependent manner without itself being part of a final effector complex. The sequence is that of DNA mismatch repair protein MutL from Pseudothermotoga lettingae (strain ATCC BAA-301 / DSM 14385 / NBRC 107922 / TMO) (Thermotoga lettingae).